The primary structure comprises 113 residues: Beta-microseminoprotein A1 (113 aa).

The first 20 residues, 1-20 (MNVLLGGLVIFATFVTLCNG), serve as a signal peptide directing secretion. Disulfide bonds link C22-C70, C38-C62, C57-C93, C60-C69, and C84-C107.

The protein belongs to the beta-microseminoprotein family.

The protein resides in the secreted. This Saguinus oedipus (Cotton-top tamarin) protein is Beta-microseminoprotein A1 (MSPA).